We begin with the raw amino-acid sequence, 382 residues long: Chaperone protein DnaJ (382 aa).

Positions 5–70 (DYYEVLGVSR…DKKAAYDRYG (66 aa)) constitute a J domain. The CR-type zinc-finger motif lies at 141 to 219 (GVQKTINVPA…CHGAGRVEKE (79 aa)). Residues C154, C157, C171, C174, C193, C196, C207, and C210 each coordinate Zn(2+). 4 CXXCXGXG motif repeats span residues 154–161 (CDACKGTG), 171–178 (CPTCSGMG), 193–200 (CPTCNGMG), and 207–214 (CKVCHGAG).

Belongs to the DnaJ family. Homodimer. The cofactor is Zn(2+).

The protein resides in the cytoplasm. In terms of biological role, participates actively in the response to hyperosmotic and heat shock by preventing the aggregation of stress-denatured proteins and by disaggregating proteins, also in an autonomous, DnaK-independent fashion. Unfolded proteins bind initially to DnaJ; upon interaction with the DnaJ-bound protein, DnaK hydrolyzes its bound ATP, resulting in the formation of a stable complex. GrpE releases ADP from DnaK; ATP binding to DnaK triggers the release of the substrate protein, thus completing the reaction cycle. Several rounds of ATP-dependent interactions between DnaJ, DnaK and GrpE are required for fully efficient folding. Also involved, together with DnaK and GrpE, in the DNA replication of plasmids through activation of initiation proteins. The polypeptide is Chaperone protein DnaJ (Cereibacter sphaeroides (strain ATCC 17029 / ATH 2.4.9) (Rhodobacter sphaeroides)).